The following is a 180-amino-acid chain: Cytidylate kinase (180 aa).

7–15 (GPPGSGTTT) is a binding site for ATP.

The protein belongs to the cytidylate kinase family. Type 2 subfamily.

The protein localises to the cytoplasm. The enzyme catalyses CMP + ATP = CDP + ADP. The catalysed reaction is dCMP + ATP = dCDP + ADP. The polypeptide is Cytidylate kinase (cmk) (Archaeoglobus fulgidus (strain ATCC 49558 / DSM 4304 / JCM 9628 / NBRC 100126 / VC-16)).